Consider the following 271-residue polypeptide: Acyl-[acyl-carrier-protein]--UDP-N-acetylglucosamine O-acyltransferase (271 aa).

The protein belongs to the transferase hexapeptide repeat family. LpxA subfamily. As to quaternary structure, homotrimer.

It is found in the cytoplasm. The enzyme catalyses a (3R)-hydroxyacyl-[ACP] + UDP-N-acetyl-alpha-D-glucosamine = a UDP-3-O-[(3R)-3-hydroxyacyl]-N-acetyl-alpha-D-glucosamine + holo-[ACP]. The protein operates within glycolipid biosynthesis; lipid IV(A) biosynthesis; lipid IV(A) from (3R)-3-hydroxytetradecanoyl-[acyl-carrier-protein] and UDP-N-acetyl-alpha-D-glucosamine: step 1/6. Functionally, involved in the biosynthesis of lipid A, a phosphorylated glycolipid that anchors the lipopolysaccharide to the outer membrane of the cell. This is Acyl-[acyl-carrier-protein]--UDP-N-acetylglucosamine O-acyltransferase from Agrobacterium fabrum (strain C58 / ATCC 33970) (Agrobacterium tumefaciens (strain C58)).